We begin with the raw amino-acid sequence, 2013 residues long: Centrosomal protein 224 (2013 aa).

HEAT repeat units lie at residues 115-153, 158-196, 200-238, 348-386, and 427-465; these read TIEADSAEPVVEALLKGTSSTSPKILLASLAALTQALKT, QIPVKLILKQFSPWFENRDKGIRDQASELFIEIYRWIGK, PLISEALTPIQLKALQDQFEKLPTDPAVPLKYTRSEAAK, TSYVKPFITPILEKFKEKKTSVLQSVHTTMDSLVGKSIS, and TKVTKQLTKIFMEALNDTDSNIRDNASKAFAALGGIIGE. The interval 512-557 is disordered; sequence PVSSSNKKPAAATGNSKSSSTTTPTGRSSNSSPLPPPPSSSDDIKN. The span at 524–543 shows a compositional bias: low complexity; the sequence is TGNSKSSSTTTPTGRSSNSS. 5 HEAT repeats span residues 724 to 762, 816 to 854, 857 to 895, 899 to 937, and 977 to 1015; these read IQQLKPLLDYTKQCLESTNPDVKKSAIKLLCTIKINIGA, VDISVKLTPAIITNLSDANWKTRSDALDEIERIIIDANR, QPKLGGLIPALKNRLTDNNQKCTITTLNIIGMLSQAMGG, EKHARLLIPGILLLLGDSKKPVRDAVISCMNVIVQSDLG, and PSEINTLAKGIISCLQDKSAEIRSLADNLLSILCTQIPL. The interval 1043 to 1109 is disordered; that stretch reads KTGQPIPPPS…QQQQRRSILQ (67 aa). Residues 1053–1106 are compositionally biased toward low complexity; it reads KTKQSTSSSSSSSSTTSQQSSTPSSPQPIRQQQQQQQQQPTQPQQQQQQQQRRS. HEAT repeat units follow at residues 1240–1279, 1281–1314, and 1317–1353; these read EYEASCLVPILLEKSGSATNEQIKQIFKQSIQQLEELCLP, VLFRFAIEMVTSQNWRTRVEVLNVMASIIDKNGA, and CGNLKVVIPLITQNLNDSQSKQSSLLCLNKLYSHIKD. Composition is skewed to low complexity over residues 1372-1406, 1695-1735, and 1746-1796; these read NNNNNNNNNNNNNNNNNNNNVQQQQQQQQQQQQQQ, NRIS…INSS, and SNNT…TLST. Disordered regions lie at residues 1372–1413, 1695–1809, 1905–1949, and 1966–1995; these read NNNN…SLST, NRIS…YSGK, NQPS…IAPQ, and TLNPDQNSGSNNNNSHQNSPSTSSSNDLNS. Residues 1799–1809 show a composition bias toward basic and acidic residues; that stretch reads INKEPRDYSGK. The span at 1913–1939 shows a compositional bias: low complexity; that stretch reads NNNNNNNNNNNNNNNNNINNNNNNNNN. Polar residues predominate over residues 1940 to 1949; it reads SGGNENIAPQ. Positions 1967-1995 are enriched in low complexity; the sequence is LNPDQNSGSNNNNSHQNSPSTSSSNDLNS.

Belongs to the TOG/XMAP215 family. In terms of assembly, interacts with eb1 at the microtubule tip, centrosome and kinetochore. Interacts with lis1 in the cortical attachment of microtubules.

Its subcellular location is the cytoplasm. The protein resides in the cytoskeleton. It localises to the microtubule organizing center. The protein localises to the centrosome. It is found in the chromosome. Its subcellular location is the centromere. The protein resides in the kinetochore. In terms of biological role, involved in regulation of microtubule dynamics. Regulates the interaction of microtubules tips with the centrosome and cell cortex. The polypeptide is Centrosomal protein 224 (mtaA) (Dictyostelium discoideum (Social amoeba)).